A 488-amino-acid polypeptide reads, in one-letter code: Ribulose bisphosphate carboxylase large chain (488 aa).

Positions 127 and 177 each coordinate substrate. Lys-179 (proton acceptor) is an active-site residue. Lys-181 is a substrate binding site. Residues Lys-205, Asp-207, and Glu-208 each contribute to the Mg(2+) site. An N6-carboxylysine modification is found at Lys-205. His-297 (proton acceptor) is an active-site residue. Substrate contacts are provided by Arg-298, His-330, and Ser-382.

Belongs to the RuBisCO large chain family. Type I subfamily. Heterohexadecamer of 8 large chains and 8 small chains. It depends on Mg(2+) as a cofactor.

Its subcellular location is the plastid. It localises to the chloroplast. The catalysed reaction is 2 (2R)-3-phosphoglycerate + 2 H(+) = D-ribulose 1,5-bisphosphate + CO2 + H2O. The enzyme catalyses D-ribulose 1,5-bisphosphate + O2 = 2-phosphoglycolate + (2R)-3-phosphoglycerate + 2 H(+). In terms of biological role, ruBisCO catalyzes two reactions: the carboxylation of D-ribulose 1,5-bisphosphate, the primary event in carbon dioxide fixation, as well as the oxidative fragmentation of the pentose substrate in the photorespiration process. Both reactions occur simultaneously and in competition at the same active site. The protein is Ribulose bisphosphate carboxylase large chain of Chrysotila carterae (Marine alga).